A 342-amino-acid chain; its full sequence is Protein RecA (342 aa).

Residue 65-72 (GPESSGKT) participates in ATP binding.

This sequence belongs to the RecA family.

The protein localises to the cytoplasm. Its function is as follows. Can catalyze the hydrolysis of ATP in the presence of single-stranded DNA, the ATP-dependent uptake of single-stranded DNA by duplex DNA, and the ATP-dependent hybridization of homologous single-stranded DNAs. It interacts with LexA causing its activation and leading to its autocatalytic cleavage. In Caldanaerobacter subterraneus subsp. tengcongensis (strain DSM 15242 / JCM 11007 / NBRC 100824 / MB4) (Thermoanaerobacter tengcongensis), this protein is Protein RecA.